Here is a 568-residue protein sequence, read N- to C-terminus: 2-succinyl-5-enolpyruvyl-6-hydroxy-3-cyclohexene-1-carboxylate synthase (568 aa).

The protein belongs to the TPP enzyme family. MenD subfamily. Homodimer. It depends on Mg(2+) as a cofactor. Mn(2+) serves as cofactor. The cofactor is thiamine diphosphate.

It catalyses the reaction isochorismate + 2-oxoglutarate + H(+) = 5-enolpyruvoyl-6-hydroxy-2-succinyl-cyclohex-3-ene-1-carboxylate + CO2. It functions in the pathway quinol/quinone metabolism; 1,4-dihydroxy-2-naphthoate biosynthesis; 1,4-dihydroxy-2-naphthoate from chorismate: step 2/7. Its pathway is quinol/quinone metabolism; menaquinone biosynthesis. Catalyzes the thiamine diphosphate-dependent decarboxylation of 2-oxoglutarate and the subsequent addition of the resulting succinic semialdehyde-thiamine pyrophosphate anion to isochorismate to yield 2-succinyl-5-enolpyruvyl-6-hydroxy-3-cyclohexene-1-carboxylate (SEPHCHC). In Histophilus somni (strain 2336) (Haemophilus somnus), this protein is 2-succinyl-5-enolpyruvyl-6-hydroxy-3-cyclohexene-1-carboxylate synthase.